Reading from the N-terminus, the 202-residue chain is Sterile alpha motif domain-containing protein 10 (202 aa).

A disordered region spans residues 1-22; it reads MFTELRSKLSPPRARAGAVRPG. The SAM domain occupies 118–184; the sequence is WSQQDVCKWL…LQQVLHLQVR (67 aa).

The sequence is that of Sterile alpha motif domain-containing protein 10 from Mus musculus (Mouse).